Reading from the N-terminus, the 292-residue chain is MSELVRKLSGTAPNPAFPRGAVDTQMHMYLPGYPALPGGPGLPPGALPGPEDYRRLMQWLGIDRVIITQGNAHQRDNGNTLACVAEMGEAAHAVVIIDATTTEKDMEKLTAAGTVGARIMDLPGGAVNLSELDAVDERAHAADWMVAVQFDGNGLLDHLPRLQKIRSRWVFDHHGKFFKGIRTDGPEMAALLKLIDRGNLWFKFAGVYESSRKSWPYADVAAFSRVIAAHAPERIVWGTNWPHNSVRETAAYPDDARLAELTLGWLPDEAARHRALVENPEALFKLSPVKAT.

The protein belongs to the metallo-dependent hydrolases superfamily. It depends on Does not require a metal cofactor. as a cofactor.

The enzyme catalyses D-galactaro-1,5-lactone = D-galactaro-1,4-lactone. It functions in the pathway carbohydrate acid metabolism; D-galacturonate degradation via prokaryotic oxidative pathway. Catalyzes the isomerization of D-galactaro-1,5-lactone to D-galactaro-1,4-lactone. This is a step in the oxidative degradation pathway of D-galacturonate, which allows A.tumefaciens to utilize D-galacturonate as a sole carbon source. This Agrobacterium fabrum (strain C58 / ATCC 33970) (Agrobacterium tumefaciens (strain C58)) protein is D-galactarolactone isomerase.